Reading from the N-terminus, the 389-residue chain is Nuclear receptor subfamily 2 group F member 1-B (389 aa).

The disordered stretch occupies residues 19-39; sequence DDQSAAGREHLQHRHSPKSAE. The nuclear receptor DNA-binding region spans 51 to 126; it reads HVECVVCGDK…VGMRREAVQR (76 aa). NR C4-type zinc fingers lie at residues 54-74 and 90-109; these read CVVC…CEGC and CRAN…CQYC. One can recognise an NR LBD domain in the interval 152-378; sequence YLSGYISLLL…TLIRDMLLSG (227 aa).

It belongs to the nuclear hormone receptor family. NR2 subfamily. In terms of tissue distribution, expressed the retina, where expression is restricted to the outer nuclear layer.

It localises to the nucleus. Its function is as follows. Putative transcription factor that is required in photoreceptor cells precursors during eye development. This Danio rerio (Zebrafish) protein is Nuclear receptor subfamily 2 group F member 1-B.